Consider the following 283-residue polypeptide: Chromatin modification-related protein png1 (283 aa).

The segment covering 137 to 171 (YSPSGASSARQTPAPSRSGASTAGRRRTSATTRGA) has biased composition (low complexity). The tract at residues 137-224 (YSPSGASSAR…NEMVSEEDME (88 aa)) is disordered. Over residues 181-216 (YTASLADSGSTRGQKVSNATATTQLETKADSTTPNE) the composition is skewed to polar residues. The PHD-type zinc finger occupies 228–277 (EKYCFCQQGSYGQMVACDNANCEREWFHMECVGLKAPPEGTWYCEACRDQ). Residues Cys-231, Cys-233, Cys-244, Cys-249, His-255, Cys-258, Cys-271, and Cys-274 each coordinate Zn(2+).

The protein belongs to the ING family. In terms of assembly, interacts with H3K4me3 and to a lesser extent with H3K4me2. Component of a histone deacetylase complex.

The protein localises to the nucleus. Functionally, component of a histone deacetylase complex responsible for the deacetylation of lysine residues on the N-terminal part of the core histones (H2A, H2B, H3 and H4). Histone deacetylation gives a tag for epigenetic repression and plays an important role in transcriptional regulation, cell cycle progression and developmental events. Has a role in silencing of mating type genes. This chain is Chromatin modification-related protein png1 (png1), found in Schizosaccharomyces pombe (strain 972 / ATCC 24843) (Fission yeast).